Here is a 220-residue protein sequence, read N- to C-terminus: MSHFKIVFLTSLSLALVFELFNTISVPITSHLFISEYNGYKFGVFGWCKVDGSICSPIRMGYSLDDILLFNDNEYLHLPNHAKYALSKLLLVHVLSFVCVLVFWLFAILICIKWLNTSKSVLLFAVGWSMVTFMVSLLGFLIDVLMFASHVTWSSWLMLVSAFFVALSGILLCLMIRDLSYRRFVKLQGEVDVCVPMTEPRDPDELNEIWKKKTSKREIL.

Topologically, residues 1–5 (MSHFK) are cytoplasmic. Residues 6 to 26 (IVFLTSLSLALVFELFNTISV) form a helical membrane-spanning segment. The Extracellular segment spans residues 27-89 (PITSHLFISE…NHAKYALSKL (63 aa)). A helical transmembrane segment spans residues 90 to 110 (LLVHVLSFVCVLVFWLFAILI). The Cytoplasmic segment spans residues 111–121 (CIKWLNTSKSV). A helical transmembrane segment spans residues 122–142 (LLFAVGWSMVTFMVSLLGFLI). At 143–155 (DVLMFASHVTWSS) the chain is on the extracellular side. A helical membrane pass occupies residues 156–176 (WLMLVSAFFVALSGILLCLMI). The Cytoplasmic segment spans residues 177-220 (RDLSYRRFVKLQGEVDVCVPMTEPRDPDELNEIWKKKTSKREIL).

It belongs to the palI/RIM9 family.

The protein localises to the cell membrane. Functionally, required for the proteolytic cleavage of the transcription factor RIM101 in response to alkaline ambient pH. The sequence is that of pH-response regulator palI/RIM9 homolog 1 from Kluyveromyces lactis (strain ATCC 8585 / CBS 2359 / DSM 70799 / NBRC 1267 / NRRL Y-1140 / WM37) (Yeast).